We begin with the raw amino-acid sequence, 1160 residues long: Nck-associated protein 1 homolog (1160 aa).

This sequence belongs to the HEM-1/HEM-2 family. As to quaternary structure, part of a Scar/WAVE complex containing brk1, scrA, abiA, pirA and napA.

Its function is as follows. Involved in regulation of actin and microtubule organization. Involved in cell adhesion. This Dictyostelium discoideum (Social amoeba) protein is Nck-associated protein 1 homolog (napA).